The primary structure comprises 562 residues: MOB kinase activator-like 2 (562 aa).

A disordered region spans residues 30 to 50 (KSGSVQGTTATATATGPPSPP). The segment covering 31-45 (SGSVQGTTATATATG) has biased composition (low complexity). Residues cysteine 170, cysteine 175, histidine 250, and histidine 255 each contribute to the Zn(2+) site. Disordered stretches follow at residues 304–378 (DDTS…TASA), 468–523 (NFSN…STTV), and 538–562 (GASA…SSTA). Composition is skewed to low complexity over residues 305–349 (DTSG…NSTS), 357–378 (NSQS…TASA), and 471–481 (NNNNNNHNLNH). A compositionally biased stretch (basic residues) spans 482 to 514 (LNHHHHHHHHQHHHQHHPHGHHGHQGHQGHQGH). Residues 547 to 562 (AVSAATGGATSASSTA) show a composition bias toward low complexity.

It belongs to the MOB1/phocein family. In terms of assembly, interacts with and activates trc, also interacts with wts.

It is found in the cytoplasm. It localises to the nucleus. Functionally, required for the normal morphogenesis of a variety of polarized outgrowths including epidermal hairs, bristles, arista laterals, and dendrites. This chain is MOB kinase activator-like 2, found in Drosophila pseudoobscura pseudoobscura (Fruit fly).